The following is a 203-amino-acid chain: Large ribosomal subunit protein uL13 (203 aa).

An N-acetylalanine modification is found at Ala-2. Arg-59 bears the Citrulline mark. Phosphoserine; by ZIPK/DAPK3 is present on Ser-77. At Arg-140 the chain carries Citrulline. The residue at position 191 (Lys-191) is an N6-acetyllysine.

Belongs to the universal ribosomal protein uL13 family. As to quaternary structure, component of the 60S ribosome. Component of the GAIT complex. Interacts with EIF4G1. In terms of processing, phosphorylation at Ser-77 upon interferon-gamma treatment in macrophages involves a DAPK1-DAPK3 kinase cascade and is causing release from the ribosome, association with the GAIT complex and subsequent involvement in transcript-selective translation inhibition. Post-translationally, citrullinated by PADI4.

Its subcellular location is the cytoplasm. Its function is as follows. Associated with ribosomes but is not required for canonical ribosome function and has extra-ribosomal functions. Component of the GAIT (gamma interferon-activated inhibitor of translation) complex which mediates interferon-gamma-induced transcript-selective translation inhibition in inflammation processes. Upon interferon-gamma activation and subsequent phosphorylation dissociates from the ribosome and assembles into the GAIT complex which binds to stem loop-containing GAIT elements in the 3'-UTR of diverse inflammatory mRNAs (such as ceruplasmin) and suppresses their translation. In the GAIT complex interacts with m7G cap-bound eIF4G at or near the eIF3-binding site and blocks the recruitment of the 43S ribosomal complex. Involved in methylation of rRNA. The protein is Large ribosomal subunit protein uL13 (Rpl13a) of Mus musculus (Mouse).